Consider the following 509-residue polypeptide: Coiled-coil domain-containing protein 181 (509 aa).

2 disordered regions span residues 1-122 (MDED…EDEE) and 237-369 (FLPP…EKKK). 2 stretches are compositionally biased toward basic and acidic residues: residues 22 to 33 (DLEWLINDKEKS) and 41 to 56 (ACKKEDDLDQVLKENE). Positions 60 to 69 (ELGQQLSDPD) are enriched in polar residues. Basic and acidic residues-rich tracts occupy residues 70–82 (NSPKDEALPRRND) and 266–275 (IKKEESEAKG). Residues 319 to 333 (RIQSAGVSPVTSTYC) show a composition bias toward polar residues. Coiled coils occupy residues 335–377 (SPRQ…VFKA) and 418–488 (LKKK…RSKQ). The span at 337–369 (RQKELQKQLERKREKLKREEEQRKLEEENEKKK) shows a compositional bias: basic and acidic residues.

This sequence belongs to the CCDC181 family. Homodimer. Interacts with HOOK1. Interacts with HOOK2. Interacts with HOOK3. In terms of tissue distribution, predominantly expressed in testis. Expressed at lower level in brain, eye, trachea and lung. Barely expressed in tongue, heart, liver, kidney, spleen and muscle. Present at high level in elongating spermatids, whereas lower levels are observed in round spermatids (at protein level).

The protein resides in the cytoplasm. It localises to the cytoskeleton. Its subcellular location is the cell projection. The protein localises to the cilium. It is found in the flagellum. Microtubule-binding protein that localizes to the microtubular manchette of elongating spermatids. The protein is Coiled-coil domain-containing protein 181 of Mus musculus (Mouse).